The primary structure comprises 419 residues: MAMISHRLRRALLTATSYVNRSISSSITPASDFPSVSAAVLKRSVIGRSTEVATRAPARLFSTRQYKLYKEGDEITEDTVLFEGCDYNHWLITMDFSKEETPKSPEEMVAAYEETCAQGLGISVEEAKQRMYACSTTTYQGFQAIMTEQESEKFKDLPGVVFILPDSYIDPQNKEYGGDKYENGVITHRPPPIQSGRARPRPRFDRSGGGSGGPQNFQRNTQYGQQPPMQGGGGSYGPQQGYATPGQGQGTQAPPPFQGGYNQGPRSPPPPYQAGYNQGQGSPVPPYQAGYNQVQGSPVPPYQGTQSSYGQGGSGNYSQGPQGGYNQGGPRNYNPQGAGNFGPASGAGNLGPAPGAGNPGYGQGYSGPGQEQNQTFPQADQRNRDWNNNNPAGQPGSDQVRSRSIMNLASFFFDILIRH.

Residues 1–60 (MAMISHRLRRALLTATSYVNRSISSSITPASDFPSVSAAVLKRSVIGRSTEVATRAPARL) constitute a mitochondrion transit peptide. Residues 174-401 (KEYGGDKYEN…AGQPGSDQVR (228 aa)) are disordered. Residues 237 to 252 (GPQQGYATPGQGQGTQ) show a composition bias toward low complexity. Residues 310 to 327 (GQGGSGNYSQGPQGGYNQ) are compositionally biased toward gly residues. The segment covering 342 to 356 (GPASGAGNLGPAPGA) has biased composition (low complexity). A compositionally biased stretch (gly residues) spans 357–367 (GNPGYGQGYSG). Over residues 371 to 401 (EQNQTFPQADQRNRDWNNNNPAGQPGSDQVR) the composition is skewed to polar residues.

Belongs to the MORF family. As to quaternary structure, homodimer and heterodimer with MORF3. Heterodimers with MORF8/RIP1, MORF4/RIP4 and MORF6/RIP6. Interacts with PCMP-E90/MEF13. Interacts with PCMP-H13/MEF35.

The protein resides in the mitochondrion. Its function is as follows. Involved in organellar RNA editing. Required for the processing of numerous RNA editing sites in mitochondria. Binds to the mitochondrial MEF19 and MEF21 factors, two pentatricopeptide repeat-containing proteins involved in RNA editing. The sequence is that of Multiple organellar RNA editing factor 1, mitochondrial from Arabidopsis thaliana (Mouse-ear cress).